The primary structure comprises 244 residues: Glucosamine-6-phosphate deaminase (244 aa).

The active-site Proton acceptor; for enolization step is Asp67. The For ring-opening step role is filled by Asn136. His138 functions as the Proton acceptor; for ring-opening step in the catalytic mechanism. Glu143 acts as the For ring-opening step in catalysis.

It belongs to the glucosamine/galactosamine-6-phosphate isomerase family. NagB subfamily.

The catalysed reaction is alpha-D-glucosamine 6-phosphate + H2O = beta-D-fructose 6-phosphate + NH4(+). It participates in amino-sugar metabolism; N-acetylneuraminate degradation; D-fructose 6-phosphate from N-acetylneuraminate: step 5/5. In terms of biological role, catalyzes the reversible isomerization-deamination of glucosamine 6-phosphate (GlcN6P) to form fructose 6-phosphate (Fru6P) and ammonium ion. This is Glucosamine-6-phosphate deaminase from Clostridium botulinum (strain ATCC 19397 / Type A).